Here is a 361-residue protein sequence, read N- to C-terminus: mRNA export factor ICP27 homolog (361 aa).

A compositionally biased stretch (low complexity) spans 1–15 (MEDSGNSSGSEASRS). Positions 1–107 (MEDSGNSSGS…SESARAAVSA (107 aa)) are disordered. The segment covering 16–36 (GSEERRPVRERLGSRPPERRP) has biased composition (basic and acidic residues). Residues 45 to 54 (RRRRGGRGGR) are RGG-box. Positions 80–99 (RQEADRPDGGPDAPPDRLSE) are enriched in basic and acidic residues. Cysteine 253, histidine 328, cysteine 332, and cysteine 337 together coordinate Zn(2+). A CHC2-type zinc finger spans residues 253 to 337 (CYLRDTPVDE…HKTGCDAPTC (85 aa)).

Belongs to the HHV-1 ICP27 protein family. As to quaternary structure, homodimer. Homodimerization is required for transactivation. Associates in a complex with RNA, and host export factors NXF1/TAP and ALYREF; these interactions allow nuclear export of viral transcripts. Interacts with three host shuttling SR proteins SRSF1, SRSF3 and SRSF7. Interacts with host SRPK1. Interacts with IE62; this interaction enhances IE62 transactivation.

It is found in the host cytoplasm. The protein resides in the host nucleus. Multifunctional regulator of the expression of viral genes that mediates nuclear export of viral intronless mRNAs. This immediate early (EI) protein promotes the nuclear export of viral intronless mRNAs by interacting with mRNAs and host NXF1/TAP. The polypeptide is mRNA export factor ICP27 homolog (Suid herpesvirus 1 (strain Kaplan) (SuHV-1)).